Here is a 106-residue protein sequence, read N- to C-terminus: ATP-dependent Clp protease adapter protein ClpS (106 aa).

This sequence belongs to the ClpS family. In terms of assembly, binds to the N-terminal domain of the chaperone ClpA.

Its function is as follows. Involved in the modulation of the specificity of the ClpAP-mediated ATP-dependent protein degradation. This is ATP-dependent Clp protease adapter protein ClpS from Serratia proteamaculans (strain 568).